A 94-amino-acid chain; its full sequence is MPLTPETLPRHELVGLDCEVVAASNPDVIGISGTVVMETTQMLTLEGADRVWHVPKDSATFAFDLSTETVLVDGDRLVARPARRTENTGDSLWR.

Belongs to the eukaryotic/archaeal RNase P protein component 1 family. In terms of assembly, consists of a catalytic RNA component and at least 4-5 protein subunits.

Its subcellular location is the cytoplasm. It carries out the reaction Endonucleolytic cleavage of RNA, removing 5'-extranucleotides from tRNA precursor.. In terms of biological role, part of ribonuclease P, a protein complex that generates mature tRNA molecules by cleaving their 5'-ends. This is Ribonuclease P protein component 1 from Haloarcula marismortui (strain ATCC 43049 / DSM 3752 / JCM 8966 / VKM B-1809) (Halobacterium marismortui).